A 141-amino-acid chain; its full sequence is ATP synthase epsilon chain (141 aa).

It belongs to the ATPase epsilon chain family. In terms of assembly, F-type ATPases have 2 components, CF(1) - the catalytic core - and CF(0) - the membrane proton channel. CF(1) has five subunits: alpha(3), beta(3), gamma(1), delta(1), epsilon(1). CF(0) has three main subunits: a, b and c.

It localises to the cell inner membrane. Functionally, produces ATP from ADP in the presence of a proton gradient across the membrane. In Azoarcus sp. (strain BH72), this protein is ATP synthase epsilon chain.